Reading from the N-terminus, the 247-residue chain is Probable transcriptional regulatory protein GM21_0933 (247 aa).

It belongs to the TACO1 family.

The protein localises to the cytoplasm. The sequence is that of Probable transcriptional regulatory protein GM21_0933 from Geobacter sp. (strain M21).